Here is a 61-residue protein sequence, read N- to C-terminus: Alpha-conotoxin-like Lp1.6a (61 aa).

Positions 1-21 are cleaved as a signal peptide; it reads MGMRMMFIIFLFVVLATTVVS. The propeptide occupies 22–44; that stretch reads FTSGRASDGRNAPANNKVSDLIR. Position 45 is a pyrrolidone carboxylic acid (Q45). Intrachain disulfides connect C47-C53 and C48-C60. Cysteine amide is present on C60.

It belongs to the conotoxin A superfamily. As to expression, expressed by the venom duct.

The protein resides in the secreted. In terms of biological role, alpha-conotoxins act on postsynaptic membranes, they bind to the nicotinic acetylcholine receptors (nAChR) and thus inhibit them. In Conus leopardus (Leopard cone), this protein is Alpha-conotoxin-like Lp1.6a.